The sequence spans 370 residues: MSAIMKSLCFSFLILASFATFFSVADAWRFNVGGNGAWVTNPQENYNTWAERNRFQVNDSLYFKYAKGSDSVQQVMKADFDGCNVRNPIKNFENGESVVTLDRSGAFYFISGNQDHCQKGQKLIVVVLAVRNQPSAPAHSPVPSVSPTQPPKSHSPVSPVAPASAPSKSQPPRSSVSPAQPPKSSSPISHTPALSPSHATSHSPATPSPSPKSPSPVSHSPSHSPAHTPSHSPAHTPSHSPAHAPSHSPAHAPSHSPAHAPSHSPAHSPSHSPATPKSPSPSSSPAQSPATPSPMTPQSPSPVSSPSPDQSAAPSDQSTPLAPSPSETTPTADNITAPAPSPRTNSASGLAVTSVMSTLFSATFTFLMFA.

Residues 1–27 (MSAIMKSLCFSFLILASFATFFSVADA) form the signal peptide. Residues 28–129 (WRFNVGGNGA…GQKLIVVVLA (102 aa)) enclose the Phytocyanin domain. Asparagine 58 carries an N-linked (GlcNAc...) asparagine glycan. The cysteines at positions 83 and 117 are disulfide-linked. Positions 135–175 (SAPAHSPVPSVSPTQPPKSHSPVSPVAPASAPSKSQPPRSS) are enriched in low complexity. Positions 135-347 (SAPAHSPVPS…PAPSPRTNSA (213 aa)) are disordered. Over residues 176–194 (VSPAQPPKSSSPISHTPAL) the composition is skewed to polar residues. Composition is skewed to low complexity over residues 195-205 (SPSHATSHSPA) and 215-290 (SPVS…QSPA). Residues 291 to 305 (TPSPMTPQSPSPVSS) show a composition bias toward pro residues. Residues 306-318 (PSPDQSAAPSDQS) show a composition bias toward low complexity. Over residues 319–334 (TPLAPSPSETTPTADN) the composition is skewed to polar residues. Residue asparagine 334 is glycosylated (N-linked (GlcNAc...) asparagine). Residue asparagine 345 is the site of GPI-anchor amidated asparagine attachment. Positions 346-370 (SASGLAVTSVMSTLFSATFTFLMFA) are cleaved as a propeptide — removed in mature form.

Belongs to the early nodulin-like (ENODL) family. As to expression, mostly expressed in stems, leaves and flowers, and, to a lower extent, in seedlings, roots and seeds.

It is found in the cell membrane. Its function is as follows. May act as a carbohydrate transporter. The polypeptide is Early nodulin-like protein 1 (Arabidopsis thaliana (Mouse-ear cress)).